We begin with the raw amino-acid sequence, 264 residues long: Merozoite surface protein 2 (264 aa).

Positions Met-1 to Ile-20 are cleaved as a signal peptide. Asn-22 and Asn-36 each carry an N-linked (GlcNAc...) asparagine glycan. Residues Ala-44 to Ala-190 form a polymorphic region region. A disordered region spans residues Glu-46 to Glu-227. 2 repeat units span residues Ala-60–Ala-91 and Ala-92–Ala-123. Residues Ala-60–Ala-123 are 2 X 32 AA perfects repeats. Over residues Ser-70–Asn-81 the composition is skewed to low complexity. The span at Gly-82–Arg-101 shows a compositional bias: polar residues. Low complexity predominate over residues Ser-102 to Ser-145. A compositionally biased stretch (basic and acidic residues) spans Thr-154–Glu-166. An N-linked (GlcNAc...) asparagine glycan is attached at Asn-213. Residues Ser-217–Lys-226 show a composition bias toward basic and acidic residues. Cys-221 and Cys-229 are oxidised to a cystine. N-linked (GlcNAc...) asparagine glycosylation is present at Asn-238. The GPI-anchor amidated asparagine moiety is linked to residue Asn-238. Residues Ser-239 to Ile-264 constitute a propeptide, removed in mature form.

It is found in the cell membrane. May play a role in the merozoite attachment to the erythrocyte. The chain is Merozoite surface protein 2 from Plasmodium falciparum (isolate FC27 / Papua New Guinea).